We begin with the raw amino-acid sequence, 416 residues long: Tryptophan synthase beta chain (416 aa).

The disordered stretch occupies residues 1–23; it reads MTSTLPSQPKDMELANSSRPSVH. K109 carries the post-translational modification N6-(pyridoxal phosphate)lysine.

This sequence belongs to the TrpB family. As to quaternary structure, tetramer of two alpha and two beta chains. It depends on pyridoxal 5'-phosphate as a cofactor.

It carries out the reaction (1S,2R)-1-C-(indol-3-yl)glycerol 3-phosphate + L-serine = D-glyceraldehyde 3-phosphate + L-tryptophan + H2O. It functions in the pathway amino-acid biosynthesis; L-tryptophan biosynthesis; L-tryptophan from chorismate: step 5/5. The beta subunit is responsible for the synthesis of L-tryptophan from indole and L-serine. The polypeptide is Tryptophan synthase beta chain (Prochlorococcus marinus (strain MIT 9211)).